Reading from the N-terminus, the 207-residue chain is Inhibitor of hydrogen peroxide resistance (207 aa).

Positions 163 to 182 (MNYIHQRTRISRSVVAEVLA) form a DNA-binding region, H-T-H motif.

The protein belongs to the IprA family.

Functionally, involved in oxidative stress resistance. The protein is Inhibitor of hydrogen peroxide resistance of Escherichia coli O157:H7.